The sequence spans 201 residues: Large ribosomal subunit protein uL4 (201 aa).

Positions 51–73 (EVTGSGKKPWRQKGTGRARAGSV) are disordered.

Belongs to the universal ribosomal protein uL4 family. In terms of assembly, part of the 50S ribosomal subunit.

Functionally, one of the primary rRNA binding proteins, this protein initially binds near the 5'-end of the 23S rRNA. It is important during the early stages of 50S assembly. It makes multiple contacts with different domains of the 23S rRNA in the assembled 50S subunit and ribosome. Its function is as follows. Forms part of the polypeptide exit tunnel. This Erwinia tasmaniensis (strain DSM 17950 / CFBP 7177 / CIP 109463 / NCPPB 4357 / Et1/99) protein is Large ribosomal subunit protein uL4.